A 911-amino-acid chain; its full sequence is Protein translocase subunit SecA (911 aa).

ATP is bound by residues glutamine 87, 105 to 109, and aspartate 512; that span reads GEGKT. Positions 561–571 are enriched in basic and acidic residues; that stretch reads RHESRRIDNQL. The tract at residues 561-583 is disordered; sequence RHESRRIDNQLRGRSGRQGDPGS. Cysteine 895, cysteine 897, cysteine 906, and histidine 907 together coordinate Zn(2+).

It belongs to the SecA family. As to quaternary structure, monomer and homodimer. Part of the essential Sec protein translocation apparatus which comprises SecA, SecYEG and auxiliary proteins SecDF-YajC and YidC. Zn(2+) is required as a cofactor.

Its subcellular location is the cell inner membrane. The protein resides in the cytoplasm. The catalysed reaction is ATP + H2O + cellular proteinSide 1 = ADP + phosphate + cellular proteinSide 2.. Functionally, part of the Sec protein translocase complex. Interacts with the SecYEG preprotein conducting channel. Has a central role in coupling the hydrolysis of ATP to the transfer of proteins into and across the cell membrane, serving both as a receptor for the preprotein-SecB complex and as an ATP-driven molecular motor driving the stepwise translocation of polypeptide chains across the membrane. The sequence is that of Protein translocase subunit SecA from Pseudomonas putida (strain W619).